A 311-amino-acid chain; its full sequence is MALPILLDCDPGHDDAIAIVLALASPELDVKAITSSAGNQTPEKTLRNVLRMLTLLNRTDIPVAGGAVKPLMRELIIADNVHGESGLDGPALPEPTFAPQNCTAVELMAKTLRESAEPVTIVSTGPQTNVALLLNSHPELHSKIARIVIMGGAMGLGNWTPAAEFNIYVDPEAAEIVFQSGIPVVMAGLDVTHKAQIHVEDTERFRAIGNPVSTIVAELLDFFLEYHKDEKWGFVGAPLHDPCTIAWLLKPELFTTVERWVGVETQGKYSQGMTVVDYYYLTGNKPNATVMVDVDRQGFVDLLADRLKFYA.

The active site involves His240.

The protein belongs to the IUNH family. RihA subfamily.

Functionally, hydrolyzes with equal efficiency cytidine or uridine to ribose and cytosine or uracil, respectively. This Escherichia coli O8 (strain IAI1) protein is Pyrimidine-specific ribonucleoside hydrolase RihA.